The sequence spans 345 residues: Ananain (345 aa).

A signal peptide spans methionine 1–alanine 24. A propeptide spans serine 25–serine 122 (activation peptide). Intrachain disulfides connect cysteine 144–cysteine 184, cysteine 178–cysteine 217, and cysteine 273–cysteine 325. The active site involves cysteine 147. Position 147 (cysteine 147) interacts with E64. Residues histidine 279 and asparagine 300 contribute to the active site.

Stem (at protein level).

The enzyme catalyses Hydrolysis of proteins with broad specificity for peptide bonds. Best reported small molecule substrate Bz-Phe-Val-Arg-|-NHMec, but broader specificity than fruit bromelain.. Its activity is regulated as follows. Strongly inhibited by chicken egg-white cystatin. Inhibited by iodoacetamide and the active-site-directed inhibitor E64 (L-trans-epoxysuccinyl-leucylamide-(4-guanido)-butane). In terms of biological role, cysteine protease. Displays a high level of diversity in substrate specificity at the P1-P1' cleavage site. A hydrophilic P1 residue is preferred, with Gln or Arg strongly preferred. Favors an Ile/Leu residue at the P2 position of substrates, with an overall higher preference for Leu. The optimal tripeptide for cleavage is Pro-Leu-Gln, with cleavage occurring after the Gln residue. Another optimal tripeptide is Val-Leu-Arg, which may imply that a hydrophobic residue at the P3 position of substrates is preferred. The sequence is that of Ananain from Ananas comosus (Pineapple).